The following is a 231-amino-acid chain: Cytochrome c oxidase assembly factor 7 (231 aa).

Sel1-like repeat units follow at residues 34 to 66, 68 to 104, 108 to 145, 146 to 182, and 183 to 218; these read PDGC…DQNE, SESC…NKGG, IDSC…DGNF, AASC…SLGH, and MWGC…DLHR.

It belongs to the hcp beta-lactamase family.

Its subcellular location is the mitochondrion intermembrane space. Functionally, may be required for assembly of mitochondrial respiratory chain complexes. In Xenopus tropicalis (Western clawed frog), this protein is Cytochrome c oxidase assembly factor 7 (coa7).